Consider the following 162-residue polypeptide: MLWKANVWVLGEAAHGISGGTIIYQLLMFIILLALLRKFAWQPLMNIMKQREEHIANEIDQAEKRRQEAEKLLEEQRELMKQSRQDDEALIENARKLAQEQKEQIVASARGQAERVKEAAKKEIEREKEQAMAALREQVASLSVVIASKVIEKELTEQDPAS.

Residues 16 to 36 (GISGGTIIYQLLMFIILLALL) traverse the membrane as a helical segment.

It belongs to the ATPase B chain family. As to quaternary structure, F-type ATPases have 2 components, F(1) - the catalytic core - and F(0) - the membrane proton channel. F(1) has five subunits: alpha(3), beta(3), gamma(1), delta(1), epsilon(1). F(0) has three main subunits: a(1), b(2) and c(10-14). The alpha and beta chains form an alternating ring which encloses part of the gamma chain. F(1) is attached to F(0) by a central stalk formed by the gamma and epsilon chains, while a peripheral stalk is formed by the delta and b chains.

It localises to the cell membrane. In terms of biological role, f(1)F(0) ATP synthase produces ATP from ADP in the presence of a proton or sodium gradient. F-type ATPases consist of two structural domains, F(1) containing the extramembraneous catalytic core and F(0) containing the membrane proton channel, linked together by a central stalk and a peripheral stalk. During catalysis, ATP synthesis in the catalytic domain of F(1) is coupled via a rotary mechanism of the central stalk subunits to proton translocation. Its function is as follows. Component of the F(0) channel, it forms part of the peripheral stalk, linking F(1) to F(0). In Bacillus caldotenax, this protein is ATP synthase subunit b.